The chain runs to 346 residues: Glycerol-3-phosphate dehydrogenase [NAD(P)+] (346 aa).

4 residues coordinate NADPH: S15, W16, R36, and K110. Positions 110, 139, and 141 each coordinate sn-glycerol 3-phosphate. A143 serves as a coordination point for NADPH. Residues K194, D247, S257, R258, and N259 each coordinate sn-glycerol 3-phosphate. K194 (proton acceptor) is an active-site residue. Residue R258 coordinates NADPH. Residues V282 and E284 each contribute to the NADPH site.

Belongs to the NAD-dependent glycerol-3-phosphate dehydrogenase family.

Its subcellular location is the cytoplasm. The enzyme catalyses sn-glycerol 3-phosphate + NAD(+) = dihydroxyacetone phosphate + NADH + H(+). It carries out the reaction sn-glycerol 3-phosphate + NADP(+) = dihydroxyacetone phosphate + NADPH + H(+). It functions in the pathway membrane lipid metabolism; glycerophospholipid metabolism. Its function is as follows. Catalyzes the reduction of the glycolytic intermediate dihydroxyacetone phosphate (DHAP) to sn-glycerol 3-phosphate (G3P), the key precursor for phospholipid synthesis. This chain is Glycerol-3-phosphate dehydrogenase [NAD(P)+], found in Xylella fastidiosa (strain Temecula1 / ATCC 700964).